A 453-amino-acid chain; its full sequence is uncharacterized protein (453 aa).

Cysteine 74, cysteine 80, cysteine 83, and cysteine 162 together coordinate [4Fe-4S] cluster. Positions 286, 315, 336, and 384 each coordinate S-adenosyl-L-methionine. Residue cysteine 411 is the Nucleophile of the active site.

Belongs to the class I-like SAM-binding methyltransferase superfamily. RNA M5U methyltransferase family.

This is an uncharacterized protein from Staphylococcus aureus (strain Mu50 / ATCC 700699).